Consider the following 451-residue polypeptide: UDP-N-acetylmuramoylalanine--D-glutamate ligase (451 aa).

Position 119–125 (glycine 119–threonine 125) interacts with ATP.

The protein belongs to the MurCDEF family.

It localises to the cytoplasm. The enzyme catalyses UDP-N-acetyl-alpha-D-muramoyl-L-alanine + D-glutamate + ATP = UDP-N-acetyl-alpha-D-muramoyl-L-alanyl-D-glutamate + ADP + phosphate + H(+). The protein operates within cell wall biogenesis; peptidoglycan biosynthesis. Its function is as follows. Cell wall formation. Catalyzes the addition of glutamate to the nucleotide precursor UDP-N-acetylmuramoyl-L-alanine (UMA). This Streptococcus agalactiae serotype Ia (strain ATCC 27591 / A909 / CDC SS700) protein is UDP-N-acetylmuramoylalanine--D-glutamate ligase.